We begin with the raw amino-acid sequence, 429 residues long: Proton/sodium-glutamate symport protein (429 aa).

The Cytoplasmic portion of the chain corresponds to 1–5; the sequence is MKRIK. The helical transmembrane segment at 6–26 threads the bilayer; it reads FGLATQIFVGLILGVIVGVIW. At 27–45 the chain is on the extracellular side; sequence YGNPALPTYLQPIGDLFLR. The chain crosses the membrane as a helical span at residues 46-66; sequence LIKMIVIPIVVSSLIIGVAGA. At 67–79 the chain is on the cytoplasmic side; that stretch reads GNGKQVGKLGFRT. The chain crosses the membrane as a helical span at residues 80–100; that stretch reads ILYFEIITTFAIILGLALANI. At 101–150 the chain is on the extracellular side; sequence FHPGTGVNIHEAQKSDISQYVETEKEQSNKSVAETFLHIVPTNFFQSLVE. Residues 151-171 form a helical membrane-spanning segment; the sequence is GDLLAIICFTVLFALGISAIG. At 172-190 the chain is on the cytoplasmic side; sequence ERGKPVLAFFEGVSHAMFH. A helical membrane pass occupies residues 191–211; it reads VVNLVMKVAPFGVFALIGVTV. At 212–224 the chain is on the extracellular side; that stretch reads SKFGLGSLISLGK. The helical transmembrane segment at 225-245 threads the bilayer; sequence LVGLVYVALAFFLIVIFGIVA. Position 246 (Lys246) is a topological domain, cytoplasmic. A helical transmembrane segment spans residues 247–267; sequence IAGISIFKFLAYMKDEILLAF. The Extracellular portion of the chain corresponds to 268–290; the sequence is STSSSETVLPRIMEKMEKIGCPK. A helical transmembrane segment spans residues 291 to 311; sequence GIVSFVIPIGYTFNLDGSVLY. The Cytoplasmic portion of the chain corresponds to 312–321; that stretch reads QSIAALFLAQ. A helical transmembrane segment spans residues 322-342; the sequence is VYGIDLTIWHQITLVLVLMVT. The Extracellular portion of the chain corresponds to 343 to 353; that stretch reads SKGMAAVPGTS. A helical transmembrane segment spans residues 354–374; that stretch reads FVVLLATLGTIGVPAEGLAFI. Topologically, residues 375-429 are cytoplasmic; that stretch reads AGVDRIMDMARTVVNLTGNALAAVVMSKWEGMFNPAKAETVMSQSKTEQNATISG.

The protein belongs to the dicarboxylate/amino acid:cation symporter (DAACS) (TC 2.A.23) family. In terms of assembly, homotrimer. Interacts with FloT.

The protein resides in the cell membrane. The protein localises to the membrane raft. In terms of biological role, this carrier protein is part of the Na(+)-dependent, binding-protein-independent glutamate-aspartate transport system. This chain is Proton/sodium-glutamate symport protein (gltT), found in Bacillus subtilis (strain 168).